Consider the following 109-residue polypeptide: Toxin YpjF (109 aa).

Belongs to the CbtA/YkfI/YpjF toxin family. As to quaternary structure, interacts with FtsZ but not MreB. Another group finds interaction with FtsZ and MreB.

Its function is as follows. Toxic component of a type IV toxin-antitoxin (TA) system. Acts as a dual toxin inhibitor that blocks cell division and cell elongation in genetically separable interactions with FtsZ and MreB. Overexpression results in inhibition of growth in liquid cultures. Overexpression leads to formation of lemon-shaped cells; inactivated by overexpression of cognate antitoxin YfjZ but not when the 2 genes are coexpressed from the same plasmid. Also neutralized by overexpression of non-cognate antitoxins YafW and CbeA. The sequence is that of Toxin YpjF (ypjF) from Escherichia coli (strain K12).